The sequence spans 741 residues: MAKGTTFIFLFSSLLVLSLSSVSADKDDHGDQQVYIVYLGSLPSREEYTPMSDHMSILQEITGESLIENRLVRSYKKSFNGFAARLTESERKRLAGMERVVSVFPSRKLKLQTTSSWNFMGLKEGIKTKRTRSIESDTIIGVIDSGIYPESDSFSDQGFGPPPKKWKGTCAGGKNFTCNNKVIGARDYTAKSKANQTARDYSGHGTHTASIAAGNAVANSNFYGLGNGTARGGVPAARIAVYKVCDNEGCDGEAMMSAFDDAIADGVDVISISIVLDNIPPFEEDPIAIGAFHAMAVGVLTVNAAGNNGPKISTVTSTAPWVFSVAASVTNRAFMAKVVLGDGKILIGRSVNTYDMNGTNYPLVYGKSAALSTCSVDKARLCEPKCLDGKLVKGKIVLCDSTKGLIEAQKLGAVGSIVKNPEPDRAFIRSFPVSFLSNDDYKSLVSYMNSTKNPKATVLKSEEISNQRAPLVASFSSRGPSSIVSDILKPDITAPGVEILAAYSPDSSPTESEFDTRRVKYSVLSGTSMACPHVAGVAAYVKTFHPQWSPSMIQSAIMTTAWPMNASGSGFVSTEFAYGSGHVDPIDAINPGLVYELTKADHINFLCGLNYTSDHLRIISGDNSTCTKEISKTLPRNLNYPTMSAKVSGTKPFNITFQRTVTNVGMQKSTYNAKVVKFPGSKLSIKVSPRVLSMKSMNEKQSFMVTVSSDSIGTKQPVSANLIWSDGTHNVRSPIIVYAMS.

The first 24 residues, 1–24, serve as a signal peptide directing secretion; that stretch reads MAKGTTFIFLFSSLLVLSLSSVSA. The propeptide at 25 to 112 is activation peptide; the sequence is DKDDHGDQQV…VFPSRKLKLQ (88 aa). Positions 34 to 111 constitute an Inhibitor I9 domain; sequence VYIVYLGSLP…SVFPSRKLKL (78 aa). The Peptidase S8 domain occupies 116-589; sequence SWNFMGLKEG…SGHVDPIDAI (474 aa). The active-site Charge relay system is the aspartate 144. N-linked (GlcNAc...) asparagine glycosylation is found at asparagine 175 and asparagine 195. Histidine 204 serves as the catalytic Charge relay system. N-linked (GlcNAc...) asparagine glycans are attached at residues asparagine 227 and asparagine 357. The 87-residue stretch at 359-445 folds into the PA domain; sequence TNYPLVYGKS…LSNDDYKSLV (87 aa). An N-linked (GlcNAc...) asparagine glycan is attached at asparagine 449. Residue serine 528 is the Charge relay system of the active site. N-linked (GlcNAc...) asparagine glycans are attached at residues asparagine 565, asparagine 610, asparagine 623, and asparagine 654.

It belongs to the peptidase S8 family. In terms of processing, the C-terminal propeptide is autocleaved.

The protein localises to the secreted. In Arabidopsis thaliana (Mouse-ear cress), this protein is Subtilisin-like protease SBT4.4.